Consider the following 395-residue polypeptide: Multidrug resistance protein MdtL (395 aa).

The Cytoplasmic segment spans residues 1–3 (MKR). Residues 4–24 (FLLCSFALVLLYPAGIDMYLV) form a helical membrane-spanning segment. The Periplasmic segment spans residues 25–41 (GLPRIAADLNASEAQLH). The chain crosses the membrane as a helical span at residues 42 to 62 (IAFSVYLAGMATAMLFAGKIA). Residues 63 to 68 (DQSGRK) lie on the Cytoplasmic side of the membrane. The chain crosses the membrane as a helical span at residues 69-89 (PVAIVGALVFMMASLLCSRAS). Topologically, residues 90 to 92 (EGS) are periplasmic. Residues 93-113 (LFLSGRFLQGVGAGGCYVVAF) form a helical membrane-spanning segment. Topologically, residues 114–130 (AILRDTLDEHRRAKVLS) are cytoplasmic. A helical membrane pass occupies residues 131 to 151 (LLNGITCIVPVLAPVVGHLIM). Residues 152 to 157 (LRFPWQ) lie on the Periplasmic side of the membrane. A helical membrane pass occupies residues 158 to 178 (SLFYTMSAMGIIVGLLSLFIL). Topologically, residues 179–216 (RETRPVRLAPRDLSRSSPAAESLINRFFVSRLAITTLS) are cytoplasmic. A helical membrane pass occupies residues 217 to 237 (VSVILTFVNASPVLLMEVMGF). Residues 238 to 246 (SRGDYAITM) are Periplasmic-facing. The helical transmembrane segment at 247–267 (ALTAGVSMVVSFSTPFALGLF) threads the bilayer. Residues 268 to 270 (KPR) are Cytoplasmic-facing. A helical transmembrane segment spans residues 271-291 (TLMLVSQGLFLTAGVTLSLAH). The Periplasmic portion of the chain corresponds to 292-294 (TNT). A helical membrane pass occupies residues 295–315 (VTLFGLTLICAGFSVGFGVAM). The Cytoplasmic portion of the chain corresponds to 316-327 (SQALGPFSLRAG). The helical transmembrane segment at 328–350 (VASSTLGIAQVCGSSLWIWLAAI) threads the bilayer. Residues 351–354 (LGIS) are Periplasmic-facing. Residues 355–377 (AMNMLIGILIGCSIVSILLIFSV) form a helical membrane-spanning segment. The Cytoplasmic portion of the chain corresponds to 378–395 (TPNRSVAEHEEIPYQSRP).

This sequence belongs to the major facilitator superfamily. DHA1 family. MdtL (TC 2.A.1.2.22) subfamily.

The protein resides in the cell inner membrane. The chain is Multidrug resistance protein MdtL (mdtL) from Salmonella typhimurium (strain LT2 / SGSC1412 / ATCC 700720).